We begin with the raw amino-acid sequence, 156 residues long: ATP synthase subunit b', chloroplastic (156 aa).

The chain crosses the membrane as a helical span at residues 24–44 (ATLPLVAIQFILLMVLLNILL).

Belongs to the ATPase B chain family. In terms of assembly, F-type ATPases have 2 components, F(1) - the catalytic core - and F(0) - the membrane proton channel. F(1) has five subunits: alpha(3), beta(3), gamma(1), delta(1), epsilon(1). F(0) has four main subunits: a(1), b(1), b'(1) and c(10-14). The alpha and beta chains form an alternating ring which encloses part of the gamma chain. F(1) is attached to F(0) by a central stalk formed by the gamma and epsilon chains, while a peripheral stalk is formed by the delta, b and b' chains.

Its subcellular location is the plastid. It is found in the chloroplast thylakoid membrane. Functionally, f(1)F(0) ATP synthase produces ATP from ADP in the presence of a proton or sodium gradient. F-type ATPases consist of two structural domains, F(1) containing the extramembraneous catalytic core and F(0) containing the membrane proton channel, linked together by a central stalk and a peripheral stalk. During catalysis, ATP synthesis in the catalytic domain of F(1) is coupled via a rotary mechanism of the central stalk subunits to proton translocation. Its function is as follows. Component of the F(0) channel, it forms part of the peripheral stalk, linking F(1) to F(0). The b'-subunit is a diverged and duplicated form of b found in plants and photosynthetic bacteria. The protein is ATP synthase subunit b', chloroplastic of Phaeodactylum tricornutum (strain CCAP 1055/1).